We begin with the raw amino-acid sequence, 59 residues long: UPF0181 protein YoaH (59 aa).

This sequence belongs to the UPF0181 family.

The protein is UPF0181 protein YoaH of Shigella flexneri serotype 5b (strain 8401).